A 123-amino-acid chain; its full sequence is Ragulator complex protein LAMTOR3-B (123 aa).

This sequence belongs to the LAMTOR3 family. As to quaternary structure, part of the Ragulator complex composed of lamtor1, lamtor2, lamtor3, lamtor4 and lamtor5. The Ragulator complex interacts with slc38a9; the probable amino acid sensor. Component of the lysosomal folliculin complex (LFC).

Its subcellular location is the late endosome membrane. Functionally, as part of the Ragulator complex it is involved in amino acid sensing and activation of mTORC1, a signaling complex promoting cell growth in response to growth factors, energy levels, and amino acids. Activated by amino acids through a mechanism involving the lysosomal V-ATPase, the Ragulator plays a dual role for the small GTPases Rag (RagA/RRAGA, RagB/RRAGB, RagC/RRAGC and/or RagD/RRAGD): it (1) acts as a guanine nucleotide exchange factor (GEF), activating the small GTPases Rag and (2) mediates recruitment of Rag GTPases to the lysosome membrane. Activated Ragulator and Rag GTPases function as a scaffold recruiting mTORC1 to lysosomes where it is in turn activated. The polypeptide is Ragulator complex protein LAMTOR3-B (lamtor3-b) (Xenopus laevis (African clawed frog)).